A 439-amino-acid chain; its full sequence is Ribulose bisphosphate carboxylase/oxygenase activase, chloroplastic (439 aa).

167-174 contributes to the ATP binding site; that stretch reads GGKGQGKS.

It belongs to the RuBisCO activase family.

The protein resides in the plastid. The protein localises to the chloroplast stroma. Functionally, activation of RuBisCO (ribulose-1,5-bisphosphate carboxylase/oxygenase; EC 4.1.1.39) involves the ATP-dependent carboxylation of the epsilon-amino group of lysine leading to a carbamate structure. In Vigna radiata var. radiata (Mung bean), this protein is Ribulose bisphosphate carboxylase/oxygenase activase, chloroplastic (RCA).